A 123-amino-acid chain; its full sequence is Small ribosomal subunit protein uS12c (123 aa).

The segment at R9–R31 is disordered.

This sequence belongs to the universal ribosomal protein uS12 family. Part of the 30S ribosomal subunit.

The protein localises to the plastid. The protein resides in the chloroplast. With S4 and S5 plays an important role in translational accuracy. Located at the interface of the 30S and 50S subunits. This chain is Small ribosomal subunit protein uS12c (rps12), found in Spirogyra maxima (Green alga).